The sequence spans 506 residues: Lysine--tRNA ligase (506 aa).

Mg(2+) contacts are provided by glutamate 416 and glutamate 423.

The protein belongs to the class-II aminoacyl-tRNA synthetase family. As to quaternary structure, homodimer. The cofactor is Mg(2+).

The protein resides in the cytoplasm. The enzyme catalyses tRNA(Lys) + L-lysine + ATP = L-lysyl-tRNA(Lys) + AMP + diphosphate. The chain is Lysine--tRNA ligase from Pelotomaculum thermopropionicum (strain DSM 13744 / JCM 10971 / SI).